A 351-amino-acid chain; its full sequence is Photosystem II D2 protein (351 aa).

The chain crosses the membrane as a helical span at residues 39-59 (CAYLALGGWLTGTTFVTSWYT). H116 contacts chlorophyll a. The chain crosses the membrane as a helical span at residues 123 to 139 (GFMLRQFEIARLVGIRP). Positions 128 and 141 each coordinate pheophytin a. The helical transmembrane segment at 151–164 (VFVSVFLMYPLGQS) threads the bilayer. Residue H196 coordinates chlorophyll a. A helical membrane pass occupies residues 206 to 226 (GALLCAIHGATVENTLFEDGE). Residues H213 and F260 each contribute to the a plastoquinone site. H213 is a Fe cation binding site. H267 is a Fe cation binding site. The helical transmembrane segment at 277 to 293 (GLWMSAIGIVGLALNLR) threads the bilayer.

It belongs to the reaction center PufL/M/PsbA/D family. As to quaternary structure, PSII is composed of 1 copy each of membrane proteins PsbA, PsbB, PsbC, PsbD, PsbE, PsbF, PsbH, PsbI, PsbJ, PsbK, PsbL, PsbM, PsbT, PsbX, PsbY, PsbZ, Psb30/Ycf12, peripheral proteins PsbO, CyanoQ (PsbQ), PsbU, PsbV and a large number of cofactors. It forms dimeric complexes. The cofactor is The D1/D2 heterodimer binds P680, chlorophylls that are the primary electron donor of PSII, and subsequent electron acceptors. It shares a non-heme iron and each subunit binds pheophytin, quinone, additional chlorophylls, carotenoids and lipids. There is also a Cl(-1) ion associated with D1 and D2, which is required for oxygen evolution. The PSII complex binds additional chlorophylls, carotenoids and specific lipids..

The protein localises to the cellular thylakoid membrane. It carries out the reaction 2 a plastoquinone + 4 hnu + 2 H2O = 2 a plastoquinol + O2. Functionally, photosystem II (PSII) is a light-driven water:plastoquinone oxidoreductase that uses light energy to abstract electrons from H(2)O, generating O(2) and a proton gradient subsequently used for ATP formation. It consists of a core antenna complex that captures photons, and an electron transfer chain that converts photonic excitation into a charge separation. The D1/D2 (PsbA/PsbD) reaction center heterodimer binds P680, the primary electron donor of PSII as well as several subsequent electron acceptors. D2 is needed for assembly of a stable PSII complex. In Crocosphaera subtropica (strain ATCC 51142 / BH68) (Cyanothece sp. (strain ATCC 51142)), this protein is Photosystem II D2 protein.